The chain runs to 124 residues: Glutaredoxin-2 (124 aa).

Cysteine 13 and cysteine 16 are joined by a disulfide.

The protein belongs to the glutaredoxin family. As to quaternary structure, homodimer.

It localises to the host cytoplasm. Its function is as follows. Glutaredoxin necessary for virion morphogenesis and virus replication. Functions as a thiol-disulfide transfer protein between membrane-associated OPG128 and substrates OPG095 or OPG053. The complete pathway for formation of disulfide bonds in intracellular virion membrane proteins sequentially involves oxidation of OPG072, OPG128 and OPG088. Exhibit thioltransferase and dehydroascorbate reductase activities in vitro. This is Glutaredoxin-2 (OPG088) from Camelus.